The sequence spans 988 residues: Bifunctional glutamine synthetase adenylyltransferase/adenylyl-removing enzyme (988 aa).

Positions Met1–Pro474 are adenylyl removase. The adenylyl transferase stretch occupies residues Leu480–Glu988.

Belongs to the GlnE family. Mg(2+) serves as cofactor.

It catalyses the reaction [glutamine synthetase]-O(4)-(5'-adenylyl)-L-tyrosine + phosphate = [glutamine synthetase]-L-tyrosine + ADP. The catalysed reaction is [glutamine synthetase]-L-tyrosine + ATP = [glutamine synthetase]-O(4)-(5'-adenylyl)-L-tyrosine + diphosphate. Its function is as follows. Involved in the regulation of glutamine synthetase GlnA, a key enzyme in the process to assimilate ammonia. When cellular nitrogen levels are high, the C-terminal adenylyl transferase (AT) inactivates GlnA by covalent transfer of an adenylyl group from ATP to specific tyrosine residue of GlnA, thus reducing its activity. Conversely, when nitrogen levels are low, the N-terminal adenylyl removase (AR) activates GlnA by removing the adenylyl group by phosphorolysis, increasing its activity. The regulatory region of GlnE binds the signal transduction protein PII (GlnB) which indicates the nitrogen status of the cell. The chain is Bifunctional glutamine synthetase adenylyltransferase/adenylyl-removing enzyme from Rhodopseudomonas palustris (strain HaA2).